The following is a 385-amino-acid chain: Leucine aminopeptidase 1 (385 aa).

An N-terminal signal peptide occupies residues 1–14; it reads MKFLTLALSATATA. Positions 15 to 85 are excised as a propeptide; the sequence is MIIVNPEQQP…YGTLHTTRVV (71 aa). Residues His185, Asp204, Glu243, and Asp270 each coordinate Zn(2+). A disulfide bond links Cys319 and Cys323. His352 is a binding site for Zn(2+).

This sequence belongs to the peptidase M28 family. M28E subfamily. Monomer. It depends on Zn(2+) as a cofactor.

It localises to the secreted. In terms of biological role, extracellular aminopeptidase that allows assimilation of proteinaceous substrates. This chain is Leucine aminopeptidase 1 (lap1), found in Penicillium rubens (strain ATCC 28089 / DSM 1075 / NRRL 1951 / Wisconsin 54-1255) (Penicillium chrysogenum).